The following is a 168-amino-acid chain: MVKDILAPGLRVVFCGINPGLSSANTGFPFAHPANRFWKVIHLAGFTDRQLKPEEAEKLLDFRCGVTKLVDRPTVQATEVKLHGLRSGGRNLIEKIEDYQPAALAVLGKQAFEQGFSQRGIAWGKQKIAIGATMVWVLPNPSGLNRIKTEKLVEAYRELDQALIMRGL.

Belongs to the uracil-DNA glycosylase (UDG) superfamily. TDG/mug family. As to quaternary structure, binds DNA as a monomer.

The protein localises to the cytoplasm. The enzyme catalyses Specifically hydrolyzes mismatched double-stranded DNA and polynucleotides, releasing free uracil.. In terms of biological role, excises ethenocytosine and uracil, which can arise by alkylation or deamination of cytosine, respectively, from the corresponding mispairs with guanine in ds-DNA. It is capable of hydrolyzing the carbon-nitrogen bond between the sugar-phosphate backbone of the DNA and the mispaired base. The complementary strand guanine functions in substrate recognition. Required for DNA damage lesion repair in stationary-phase cells. This chain is G/U mismatch-specific DNA glycosylase, found in Salmonella choleraesuis (strain SC-B67).